The sequence spans 490 residues: Metal cation symporter ZIP14 (490 aa).

An N-terminal signal peptide occupies residues 1 to 28 (MELLRPALPSYFLLTLLSIWTAASEARA). Residues 29 to 155 (VSTGMPTISA…PSSVEVWGYG (127 aa)) are Extracellular-facing. 3 N-linked (GlcNAc...) asparagine glycosylation sites follow: Asn-75, Asn-85, and Asn-100. The segment at 127–146 (ACSSENQENEENEQTEEGRP) is disordered. Residues 156–176 (LLCVTVISLCSLLGASVVPFM) form a helical membrane-spanning segment. The Cytoplasmic segment spans residues 177 to 184 (KKTFYKRL). The chain crosses the membrane as a helical span at residues 185-205 (LLYFIALAIGTLYSNALFQLI). Residues 206-222 (PEAFGFNPMEDYYVSKS) lie on the Extracellular side of the membrane. A helical transmembrane segment spans residues 223–243 (AVVFGGFYLFFFTEKILKMLL). Residues 244 to 395 (KQKNEHHHGH…LLNAGMSLQQ (152 aa)) lie on the Cytoplasmic side of the membrane. Residues 249-256 (HHHGHSHY) carry the HHHGHXHX-motif motif. The short motif at 374-379 (EEFPHE) is the XEXPHE-motif element. A helical transmembrane segment spans residues 396–416 (ALFFNFLSACCCYVGLGFGIL). The Extracellular segment spans residues 417–422 (AGSHFS). A helical membrane pass occupies residues 423–443 (ANWIFALAGGMFLYISLADMF). At 444–459 (PEMNEVSQEDERKGSA) the chain is on the cytoplasmic side. Residues 460 to 480 (LIPFVIQNLGLLTGFGIMLVL) form a helical membrane-spanning segment. Residues 481 to 490 (TMYSGHIQIG) lie on the Extracellular side of the membrane.

This sequence belongs to the ZIP transporter (TC 2.A.5) family. In terms of assembly, homotrimer. In terms of processing, ubiquitinated. Ubiquitination occurs upon iron depletion. The ubiquitinated form undergoes proteasomal degradation. N-glycosylated. N-glycosylation at Asn-100 is required for iron-regulated extraction of the transporter from membranes and subsequent proteasomal degradation.

It localises to the cell membrane. It is found in the apical cell membrane. The protein resides in the basolateral cell membrane. The protein localises to the early endosome membrane. Its subcellular location is the late endosome membrane. It localises to the lysosome membrane. It carries out the reaction Zn(2+)(out) + 2 hydrogencarbonate(out) = Zn(2+)(in) + 2 hydrogencarbonate(in). It catalyses the reaction Mn(2+)(out) + 2 hydrogencarbonate(out) = Mn(2+)(in) + 2 hydrogencarbonate(in). The enzyme catalyses Fe(2+)(out) + 2 hydrogencarbonate(out) = Fe(2+)(in) + 2 hydrogencarbonate(in). The catalysed reaction is Cd(2+)(out) + 2 hydrogencarbonate(out) = Cd(2+)(in) + 2 hydrogencarbonate(in). Its function is as follows. Electroneutral transporter of the plasma membrane mediating the cellular uptake of the divalent metal cations zinc, manganese and iron that are important for tissue homeostasis, metabolism, development and immunity. Functions as an energy-dependent symporter, transporting through the membranes an electroneutral complex composed of a divalent metal cation and two bicarbonate anions. Beside these endogenous cellular substrates, can also import cadmium a non-essential metal which is cytotoxic and carcinogenic. This is Metal cation symporter ZIP14 from Bos taurus (Bovine).